The following is a 157-amino-acid chain: Transcriptional repressor NrdR (157 aa).

The tract at residues 1–24 is disordered; the sequence is MRCPKCGGNKSSVVDSRQAEDGNT. The segment at 3 to 34 is a zinc-finger region; it reads CPKCGGNKSSVVDSRQAEDGNTIRRRRECEEC. In terms of domain architecture, ATP-cone spans 49-139; that stretch reads LVVVKKDGTR…VYRSFKDVGE (91 aa).

This sequence belongs to the NrdR family. The cofactor is Zn(2+).

Negatively regulates transcription of bacterial ribonucleotide reductase nrd genes and operons by binding to NrdR-boxes. The sequence is that of Transcriptional repressor NrdR from Streptococcus sanguinis (strain SK36).